The primary structure comprises 1025 residues: Transcription factor tau 131 kDa subunit (1025 aa).

The segment covering 1 to 26 (MAAGKLKKEQQNQSAERESADTGKVN) has biased composition (basic and acidic residues). The segment at 1-71 (MAAGKLKKEQ…EDEYNSERDS (71 aa)) is disordered. Acidic residues predominate over residues 46–65 (DEEYDDEDVPHDLQLSEDEY). TPR repeat units follow at residues 128-161 (VAQL…DARN), 162-195 (FAAY…NASD), 196-229 (WEFW…NPME), 230-263 (WESI…NPYD), and 264-297 (ANIL…NVER). Residues 128–569 (VAQLLSQANE…VDVVEMRKHQ (442 aa)) are sufficient to bind BDP1. The tract at residues 309–334 (LDSSDEESAAEGEDADEKEPLEQDED) is disordered. A Phosphoserine modification is found at Ser311. Acidic residues predominate over residues 311–325 (SSDEESAAEGEDADE). TPR repeat units lie at residues 432–465 (IDIR…TFSD), 467–501 (ADLY…EWRT), 502–535 (TDVF…EPDD), 536–569 (LDIR…RKHQ), 875–908 (PYLY…IPDD), and 959–992 (QEAD…YDDG).

As to quaternary structure, component of the TFIIIC complex composed of TFC1, TFC3, TFC4, TFC6, TFC7 and TFC8. The subunits are organized in two globular domains, tauA and tauB, connected by a proteolysis-sensitive and flexible linker. Interacts with TFC1, TFC3, TFC6, TFIIIB subunits BRF1 and BDP1, and with RNA polymerase III subunit RPC10. Phosphorylated.

Its subcellular location is the nucleus. Functionally, TFIIIC mediates tRNA and 5S RNA gene activation by binding to intragenic promoter elements. Upstream of the transcription start site, TFIIIC assembles the initiation complex TFIIIB-TFIIIC-tDNA, which is sufficient for RNA polymerase III recruitment and function. Part of the tauA domain of TFIIIC that binds boxA DNA promoter sites of tRNA and similar genes. TFC4 is the TFIIIB-assembling subunit of TFIIIC and essential for viability. The sequence is that of Transcription factor tau 131 kDa subunit (TFC4) from Saccharomyces cerevisiae (strain ATCC 204508 / S288c) (Baker's yeast).